The chain runs to 144 residues: Nucleoside diphosphate kinase (144 aa).

Residues lysine 11, phenylalanine 59, arginine 87, threonine 93, arginine 104, and asparagine 114 each contribute to the ATP site. Histidine 117 serves as the catalytic Pros-phosphohistidine intermediate.

It belongs to the NDK family. Homotetramer. Requires Mg(2+) as cofactor.

It is found in the cytoplasm. The catalysed reaction is a 2'-deoxyribonucleoside 5'-diphosphate + ATP = a 2'-deoxyribonucleoside 5'-triphosphate + ADP. It carries out the reaction a ribonucleoside 5'-diphosphate + ATP = a ribonucleoside 5'-triphosphate + ADP. Its function is as follows. Major role in the synthesis of nucleoside triphosphates other than ATP. The ATP gamma phosphate is transferred to the NDP beta phosphate via a ping-pong mechanism, using a phosphorylated active-site intermediate. This chain is Nucleoside diphosphate kinase, found in Psychromonas ingrahamii (strain DSM 17664 / CCUG 51855 / 37).